The chain runs to 25 residues: Small ribosomal subunit protein eS32 (25 aa).

Residues 1–25 (MREKWKKKRSRRLRRKRRKMRARSK) are disordered.

Belongs to the eukaryotic ribosomal protein eS32 family. Component of the large ribosomal subunit.

The chain is Small ribosomal subunit protein eS32 (rpl41) from Agaricus bisporus (White button mushroom).